The chain runs to 219 residues: Large ribosomal subunit protein uL16 (219 aa).

It belongs to the universal ribosomal protein uL16 family. In terms of assembly, component of the small ribosomal subunit. Mature ribosomes consist of a small (40S) and a large (60S) subunit. The 40S subunit contains about 33 different proteins and 1 molecule of RNA (18S). The 60S subunit contains about 49 different proteins and 3 molecules of RNA (25S, 5.8S and 5S).

The polypeptide is Large ribosomal subunit protein uL16 (RPL10) (Encephalitozoon cuniculi (strain GB-M1) (Microsporidian parasite)).